We begin with the raw amino-acid sequence, 270 residues long: uncharacterized protein (270 aa).

A signal peptide spans 1–22 (MEYIKKIALYMSVLLLIIFIGG). Cys-23 is lipidated: N-palmitoyl cysteine. A lipid anchor (S-diacylglycerol cysteine) is attached at Cys-23.

This sequence belongs to the staphylococcal tandem lipoprotein family.

The protein localises to the cell membrane. This is an uncharacterized protein from Staphylococcus aureus (strain NCTC 8325 / PS 47).